The chain runs to 121 residues: Protein PilH (121 aa).

The Response regulatory domain occupies 3–119 (RILIVDDSPT…TLLKTINAVL (117 aa)). Asp52 bears the 4-aspartylphosphate mark.

Its function is as follows. May be a part of a signal-transduction system that regulates twitching motility by controlling pilus function (extension and retraction). In Pseudomonas aeruginosa (strain ATCC 15692 / DSM 22644 / CIP 104116 / JCM 14847 / LMG 12228 / 1C / PRS 101 / PAO1), this protein is Protein PilH (pilH).